Reading from the N-terminus, the 141-residue chain is Large ribosomal subunit protein uL11 (141 aa).

The protein belongs to the universal ribosomal protein uL11 family. In terms of assembly, part of the ribosomal stalk of the 50S ribosomal subunit. Interacts with L10 and the large rRNA to form the base of the stalk. L10 forms an elongated spine to which L12 dimers bind in a sequential fashion forming a multimeric L10(L12)X complex. Post-translationally, one or more lysine residues are methylated.

In terms of biological role, forms part of the ribosomal stalk which helps the ribosome interact with GTP-bound translation factors. This chain is Large ribosomal subunit protein uL11, found in Streptococcus pneumoniae (strain Hungary19A-6).